Reading from the N-terminus, the 422-residue chain is Metallocarboxypeptidase A (422 aa).

An N-terminal signal peptide occupies residues 1–17 (MRSVLSLALLAANVVTA). Positions 18 to 112 (AVVSPFDYSG…FEAYSAGYAP (95 aa)) are cleaved as a propeptide — activation peptide. The Peptidase M14 domain maps to 119-419 (SYHSYQDHIS…AGTVAMLKAV (301 aa)). Residues His179 and Glu182 each coordinate Zn(2+). Residues 179–182 (HARE), Arg237, and 254–255 (NR) each bind substrate. Cys248 and Cys271 are oxidised to a cystine. Residue His309 coordinates Zn(2+). Substrate is bound at residue 310 to 311 (SY). The active-site Proton donor/acceptor is the Glu385.

It belongs to the peptidase M14 family. Zn(2+) is required as a cofactor.

The protein resides in the secreted. Extracellular metalloprotease that contributes to pathogenicity. The protein is Metallocarboxypeptidase A (MCPA) of Trichophyton equinum (Horse ringworm fungus).